Here is a 316-residue protein sequence, read N- to C-terminus: Transaldolase 2 (316 aa).

Lys131 functions as the Schiff-base intermediate with substrate in the catalytic mechanism.

It belongs to the transaldolase family. Type 1 subfamily. As to quaternary structure, homodimer.

The protein resides in the cytoplasm. It carries out the reaction D-sedoheptulose 7-phosphate + D-glyceraldehyde 3-phosphate = D-erythrose 4-phosphate + beta-D-fructose 6-phosphate. The protein operates within carbohydrate degradation; pentose phosphate pathway; D-glyceraldehyde 3-phosphate and beta-D-fructose 6-phosphate from D-ribose 5-phosphate and D-xylulose 5-phosphate (non-oxidative stage): step 2/3. In terms of biological role, transaldolase is important for the balance of metabolites in the pentose-phosphate pathway. The chain is Transaldolase 2 from Salmonella paratyphi A (strain ATCC 9150 / SARB42).